The chain runs to 884 residues: Alanine--tRNA ligase (884 aa).

H562, H566, C676, and H680 together coordinate Zn(2+).

It belongs to the class-II aminoacyl-tRNA synthetase family. It depends on Zn(2+) as a cofactor.

It is found in the cytoplasm. The enzyme catalyses tRNA(Ala) + L-alanine + ATP = L-alanyl-tRNA(Ala) + AMP + diphosphate. Functionally, catalyzes the attachment of alanine to tRNA(Ala) in a two-step reaction: alanine is first activated by ATP to form Ala-AMP and then transferred to the acceptor end of tRNA(Ala). Also edits incorrectly charged Ser-tRNA(Ala) and Gly-tRNA(Ala) via its editing domain. The sequence is that of Alanine--tRNA ligase from Jannaschia sp. (strain CCS1).